A 338-amino-acid polypeptide reads, in one-letter code: tRNA-specific 2-thiouridylase MnmA (338 aa).

ATP-binding positions include Ala-6–Ser-13 and Met-32. Catalysis depends on Cys-92, which acts as the Nucleophile. A disulfide bridge connects residues Cys-92 and Cys-186. Gly-116 is a binding site for ATP. The interval Lys-134–Gln-136 is interaction with tRNA. Cys-186 serves as the catalytic Cysteine persulfide intermediate. The tract at residues Arg-288–Tyr-289 is interaction with tRNA.

It belongs to the MnmA/TRMU family.

The protein localises to the cytoplasm. The catalysed reaction is S-sulfanyl-L-cysteinyl-[protein] + uridine(34) in tRNA + AH2 + ATP = 2-thiouridine(34) in tRNA + L-cysteinyl-[protein] + A + AMP + diphosphate + H(+). Functionally, catalyzes the 2-thiolation of uridine at the wobble position (U34) of tRNA, leading to the formation of s(2)U34. The polypeptide is tRNA-specific 2-thiouridylase MnmA (Campylobacter lari (strain RM2100 / D67 / ATCC BAA-1060)).